Consider the following 83-residue polypeptide: Retinal cone rhodopsin-sensitive cGMP 3',5'-cyclic phosphodiesterase subunit gamma (83 aa).

Residues 1–54 form a disordered region; it reads MSDSPSLSPPAPSQGPTTPRKGPPKFKQRQTRQFKSKPPKKGVKGFGDDIPGME. Residues 22-43 are compositionally biased toward basic residues; the sequence is GPPKFKQRQTRQFKSKPPKKGV.

Belongs to the rod/cone cGMP-PDE gamma subunit family. As to quaternary structure, tetramer composed of two catalytic chains (alpha and beta), and two inhibitory chains (gamma).

It catalyses the reaction 3',5'-cyclic GMP + H2O = GMP + H(+). In terms of biological role, participates in processes of transmission and amplification of the visual signal. cGMP-PDEs are the effector molecules in G-protein-mediated phototransduction in vertebrate rods and cones. The protein is Retinal cone rhodopsin-sensitive cGMP 3',5'-cyclic phosphodiesterase subunit gamma (Pde6h) of Mus musculus (Mouse).